Reading from the N-terminus, the 204-residue chain is dTTP/UTP pyrophosphatase (204 aa).

D68 functions as the Proton acceptor in the catalytic mechanism.

It belongs to the Maf family. YhdE subfamily. The cofactor is a divalent metal cation.

The protein localises to the cytoplasm. The catalysed reaction is dTTP + H2O = dTMP + diphosphate + H(+). The enzyme catalyses UTP + H2O = UMP + diphosphate + H(+). Its function is as follows. Nucleoside triphosphate pyrophosphatase that hydrolyzes dTTP and UTP. May have a dual role in cell division arrest and in preventing the incorporation of modified nucleotides into cellular nucleic acids. This chain is dTTP/UTP pyrophosphatase, found in Thermotoga maritima (strain ATCC 43589 / DSM 3109 / JCM 10099 / NBRC 100826 / MSB8).